Here is a 724-residue protein sequence, read N- to C-terminus: Catalase-peroxidase (724 aa).

The tryptophyl-tyrosyl-methioninium (Trp-Tyr) (with M-251) cross-link spans 96 to 225 (WHAAGTYRVA…LAAVMMGLIY (130 aa)). The Proton acceptor role is filled by H97. Residues 225–251 (YVNPEGVDGNPDPLRTAEDVRITFERM) constitute a cross-link (tryptophyl-tyrosyl-methioninium (Tyr-Met) (with W-96)). Heme b is bound at residue H266.

It belongs to the peroxidase family. Peroxidase/catalase subfamily. As to quaternary structure, homodimer or homotetramer. It depends on heme b as a cofactor. Post-translationally, formation of the three residue Trp-Tyr-Met cross-link is important for the catalase, but not the peroxidase activity of the enzyme.

The catalysed reaction is H2O2 + AH2 = A + 2 H2O. It catalyses the reaction 2 H2O2 = O2 + 2 H2O. In terms of biological role, bifunctional enzyme with both catalase and broad-spectrum peroxidase activity. This chain is Catalase-peroxidase, found in Halorhodospira halophila (strain DSM 244 / SL1) (Ectothiorhodospira halophila (strain DSM 244 / SL1)).